The primary structure comprises 321 residues: Genome polyprotein (321 aa).

Topologically, residues 1–52 (RNLGKVIDTLTCGFADLMGYIPLVGAPLGGAARALAHGVRVLEDGVNYATGN) are cytoplasmic. Positions 6 to 57 (VIDTLTCGFADLMGYIPLVGAPLGGAARALAHGVRVLEDGVNYATGNLPGCS) are interaction with APOA2. The interval 48 to 51 (YATG) is important for lipid droplets localization. A helical transmembrane segment spans residues 53-73 (LPGCSFSLFLLALLSCLTVPA). A propeptide spans 62–75 (LLALLSCLTVPASA) (ER anchor for the core protein, removed in mature form by host signal peptidase). Residues 74–242 (SAYQVRNSTG…AGAHWGVLAG (169 aa)) lie on the Lumenal side of the membrane. N-linked (GlcNAc...) asparagine; by host glycans are attached at residues N80, N93, and N118. The tract at residues 149 to 180 (LVGSATLCSALYVGDLCGSIFLVGQLFTFSPR) is important for fusion. N189 carries an N-linked (GlcNAc...) asparagine; by host glycan. The chain crosses the membrane as a helical span at residues 243–263 (IAYFSMVGNWAKVLVVLLLFA). The Lumenal portion of the chain corresponds to 264–321 (GVDAETTVTGGSAAHGALGIASLFNQGARQNIQLINTNGSWHINSTALNCNDSLNTGW). The interval 268-294 (ETTVTGGSAAHGALGIASLFNQGARQN) is HVR1. N-linked (GlcNAc...) (high mannose) asparagine; by host glycosylation is found at N301, N307, and N314.

The protein belongs to the hepacivirus polyprotein family. In terms of assembly, homooligomer. Interacts with E1 (via C-terminus). Interacts with the non-structural protein 5A. Interacts (via N-terminus) with host STAT1 (via SH2 domain); this interaction results in decreased STAT1 phosphorylation and ubiquitin-mediated proteasome-dependent STAT1 degradation, leading to decreased IFN-stimulated gene transcription. Interacts with host STAT3; this interaction constitutively activates STAT3. Interacts with host LTBR receptor. Interacts with host TNFRSF1A receptor and possibly induces apoptosis. Interacts with host HNRPK. Interacts with host YWHAE. Interacts with host UBE3A/E6AP. Interacts with host DDX3X. Interacts with host APOA2. Interacts with host RXRA protein. Interacts with host SP110 isoform 3/Sp110b; this interaction sequesters the transcriptional corepressor SP110 away from the nucleus. Interacts with host CREB3 nuclear transcription protein; this interaction triggers cell transformation. Interacts with host ACY3. Interacts with host C1QR1. Interacts with host RBM24; this interaction, which enhances the interaction of the mature core protein with 5'-UTR, may inhibit viral translation and favor replication. Interacts with host EIF2AK2/PKR; this interaction induces the autophosphorylation of EIF2AK2. Part of the viral assembly initiation complex composed of NS2, E1, E2, NS3, NS4A, NS5A and the mature core protein. As to quaternary structure, forms a heterodimer with envelope glycoprotein E2. Interacts with mature core protein. Interacts with protease NS2. The heterodimer E1/E2 interacts with host CLDN1; this interaction plays a role in viral entry into host cell. Interacts with host SPSB2 (via C-terminus). Part of the viral assembly initiation complex composed of NS2, E1, E2, NS3, NS4A, NS5A and the mature core protein. Forms a heterodimer with envelope glycoprotein E1. Interacts with host CD81 and SCARB1 receptors; these interactions play a role in viral entry into host cell. Interacts with host EIF2AK2/PKR; this interaction inhibits EIF2AK2 and probably allows the virus to evade the innate immune response. Interacts with host CD209/DC-SIGN and CLEC4M/DC-SIGNR. Interact with host SPCS1; this interaction is essential for viral particle assembly. Interacts with protease NS2. The heterodimer E1/E2 interacts with host CLDN1; this interaction plays a role in viral entry into host cell. Part of the viral assembly initiation complex composed of NS2, E1, E2, NS3, NS4A, NS5A and the mature core protein. In terms of processing, specific enzymatic cleavages in vivo yield mature proteins. The structural proteins, core, E1, E2 and p7 are produced by proteolytic processing by host signal peptidases. The core protein precursor is synthesized as a 23 kDa, which is retained in the ER membrane through the hydrophobic signal peptide. Cleavage by the signal peptidase releases the 21 kDa mature core protein. The cleavage of the core protein precursor occurs between aminoacids 176 and 188 but the exact cleavage site is not known. Some degraded forms of the core protein appear as well during the course of infection. The other proteins (p7, NS2, NS3, NS4A, NS4B, NS5A and NS5B) are cleaved by the viral proteases. Autoprocessing between NS2 and NS3 is mediated by the NS2 cysteine protease catalytic domain and regulated by the NS3 N-terminal domain. Post-translationally, phosphorylated by host PKC and PKA. Ubiquitinated; mediated by UBE3A and leading to core protein subsequent proteasomal degradation. In terms of processing, highly N-glycosylated.

The protein localises to the host endoplasmic reticulum membrane. The protein resides in the host mitochondrion membrane. It localises to the virion. It is found in the host cytoplasm. Its subcellular location is the host nucleus. The protein localises to the host lipid droplet. The protein resides in the virion membrane. Its function is as follows. Packages viral RNA to form a viral nucleocapsid, and promotes virion budding. Participates in the viral particle production as a result of its interaction with the non-structural protein 5A. Binds RNA and may function as a RNA chaperone to induce the RNA structural rearrangements taking place during virus replication. Modulates viral translation initiation by interacting with viral IRES and 40S ribosomal subunit. Affects various cell signaling pathways, host immunity and lipid metabolism. Prevents the establishment of cellular antiviral state by blocking the interferon-alpha/beta (IFN-alpha/beta) and IFN-gamma signaling pathways and by blocking the formation of phosphorylated STAT1 and promoting ubiquitin-mediated proteasome-dependent degradation of STAT1. Activates STAT3 leading to cellular transformation. Regulates the activity of cellular genes, including c-myc and c-fos. May repress the promoter of p53, and sequester CREB3 and SP110 isoform 3/Sp110b in the cytoplasm. Represses cell cycle negative regulating factor CDKN1A, thereby interrupting an important check point of normal cell cycle regulation. Targets transcription factors involved in the regulation of inflammatory responses and in the immune response: suppresses TNF-induced NF-kappa-B activation, and activates AP-1. Binds to dendritic cells (DCs) via C1QR1, resulting in down-regulation of T-lymphocytes proliferation. Alters lipid metabolism by interacting with hepatocellular proteins involved in lipid accumulation and storage. Induces up-regulation of FAS promoter activity, and thereby contributes to the increased triglyceride accumulation in hepatocytes (steatosis). In terms of biological role, forms a heterodimer with envelope glycoprotein E2, which mediates virus attachment to the host cell, virion internalization through clathrin-dependent endocytosis and fusion with host membrane. Fusion with the host cell is most likely mediated by both E1 and E2, through conformational rearrangements of the heterodimer required for fusion rather than a classical class II fusion mechanism. E1/E2 heterodimer binds host apolipoproteins such as APOB and ApoE thereby forming a lipo-viro-particle (LVP). APOE associated to the LVP allows the initial virus attachment to cell surface receptors such as the heparan sulfate proteoglycans (HSPGs), syndecan-1 (SDC1), syndecan-1 (SDC2), the low-density lipoprotein receptor (LDLR) and scavenger receptor class B type I (SCARB1). The cholesterol transfer activity of SCARB1 allows E2 exposure and binding of E2 to SCARB1 and the tetraspanin CD81. E1/E2 heterodimer binding on CD81 activates the epithelial growth factor receptor (EGFR) signaling pathway. Diffusion of the complex E1-E2-EGFR-SCARB1-CD81 to the cell lateral membrane allows further interaction with Claudin 1 (CLDN1) and occludin (OCLN) to finally trigger HCV entry. Forms a heterodimer with envelope glycoprotein E1, which mediates virus attachment to the host cell, virion internalization through clathrin-dependent endocytosis and fusion with host membrane. Fusion with the host cell is most likely mediated by both E1 and E2, through conformational rearrangements of the heterodimer required for fusion rather than a classical class II fusion mechanism. The interaction between envelope glycoprotein E2 and host apolipoprotein E/APOE allows the proper assembly, maturation and infectivity of the viral particles. This interaction is probably promoted via the up-regulation of cellular autophagy by the virus. E1/E2 heterodimer binds host apolipoproteins such as APOB and APOE thereby forming a lipo-viro-particle (LVP). APOE associated to the LVP allows the initial virus attachment to cell surface receptors such as the heparan sulfate proteoglycans (HSPGs), syndecan-1 (SDC1), syndecan-1 (SDC2), the low-density lipoprotein receptor (LDLR) and scavenger receptor class B type I (SCARB1). The cholesterol transfer activity of SCARB1 allows E2 exposure and binding of E2 to SCARB1 and the tetraspanin CD81. E1/E2 heterodimer binding on CD81 activates the epithelial growth factor receptor (EGFR) signaling pathway. Diffusion of the complex E1-E2-EGFR-SCARB1-CD81 to the cell lateral membrane allows further interaction with Claudin 1 (CLDN1) and occludin (OCLN) to finally trigger HCV entry. Inhibits host EIF2AK2/PKR activation, preventing the establishment of an antiviral state. Viral ligand for CD209/DC-SIGN and CLEC4M/DC-SIGNR, which are respectively found on dendritic cells (DCs), and on liver sinusoidal endothelial cells and macrophage-like cells of lymph node sinuses. These interactions allow the capture of circulating HCV particles by these cells and subsequent facilitated transmission to permissive cells such as hepatocytes and lymphocyte subpopulations. The sequence is that of Genome polyprotein from Homo sapiens (Human).